An 89-amino-acid polypeptide reads, in one-letter code: Large ribosomal subunit protein bL27 (89 aa).

A disordered region spans residues 1–22 (MAHKKAGGSSRNGRDSESKRLG).

The protein belongs to the bacterial ribosomal protein bL27 family.

This chain is Large ribosomal subunit protein bL27, found in Brucella abortus (strain S19).